The primary structure comprises 440 residues: Argininosuccinate lyase (440 aa).

Belongs to the lyase 1 family. Argininosuccinate lyase subfamily.

The protein resides in the cytoplasm. The enzyme catalyses 2-(N(omega)-L-arginino)succinate = fumarate + L-arginine. Its pathway is amino-acid biosynthesis; L-arginine biosynthesis; L-arginine from L-ornithine and carbamoyl phosphate: step 3/3. This Clostridium botulinum (strain Loch Maree / Type A3) protein is Argininosuccinate lyase.